The primary structure comprises 880 residues: Leucine--tRNA ligase (880 aa).

A 'HIGH' region motif is present at residues 46–56 (PYPSGALHMGH). The short motif at 638–642 (KMSKS) is the 'KMSKS' region element. Lys-641 is a binding site for ATP.

This sequence belongs to the class-I aminoacyl-tRNA synthetase family.

Its subcellular location is the cytoplasm. It carries out the reaction tRNA(Leu) + L-leucine + ATP = L-leucyl-tRNA(Leu) + AMP + diphosphate. The polypeptide is Leucine--tRNA ligase (Xanthomonas axonopodis pv. citri (strain 306)).